The chain runs to 432 residues: UDP-N-acetylmuramate--L-alanine ligase (432 aa).

108-114 serves as a coordination point for ATP; that stretch reads GAHGKTS.

It belongs to the MurCDEF family.

The protein localises to the cytoplasm. It catalyses the reaction UDP-N-acetyl-alpha-D-muramate + L-alanine + ATP = UDP-N-acetyl-alpha-D-muramoyl-L-alanine + ADP + phosphate + H(+). The protein operates within cell wall biogenesis; peptidoglycan biosynthesis. In terms of biological role, cell wall formation. In Bacillus pumilus (strain SAFR-032), this protein is UDP-N-acetylmuramate--L-alanine ligase.